The following is a 560-amino-acid chain: uncharacterized protein (560 aa).

5 helical membrane passes run 9-29, 61-81, 136-156, 305-325, and 442-462; these read LVITILLIVLGANWLLSSFLL, ILVPTGFPLTTGLGLSLKYKI, IGIANSIATVEGFTLSLASMM, SLQIWGKLFAVLLHGGSASFI, and VVLELYCPYAIMGPVAHTNFY.

The protein localises to the membrane. This is an uncharacterized protein from Saccharomyces cerevisiae (strain ATCC 204508 / S288c) (Baker's yeast).